A 533-amino-acid polypeptide reads, in one-letter code: Zinc finger protein 26 (533 aa).

In terms of domain architecture, KRAB spans 14 to 85 (LSFKDISMEF…NAKISRQSCP (72 aa)). 13 C2H2-type zinc fingers span residues 174–196 (CVCSECGKAFRCKSQLIVHLRIH), 202–224 (YECSKCERAFSAKSNLNAHQRVH), 230–252 (YSCSECEKVFSFRSQLIVHQEIH), 258–280 (YGCSECGKAYSWKSQLLLHQRSH), 286–308 (YECSECGKAFSLKSPFVVHQRTH), 314–336 (HKCSECGKAFRSKSYLLVHIRMH), 342–364 (YQCSDCGKAFNMKTQLIVHQGVH), 370–392 (YQCGECGKAFGRKEQLTAHLRAH), 398–420 (YGCSECGKAFSSKSYLVIHRRTH), 426–448 (YECSLCERAFCGKSQLIIHQRTH), 454–476 (YECNECEKAYPRKASLQIHQKTH), 482–504 (FKCSECGKAFTQKSSLSEHQRVH), and 510–532 (WKCSECGKSFCWNSGLRIHRKTH).

It belongs to the krueppel C2H2-type zinc-finger protein family.

It is found in the nucleus. In terms of biological role, may be involved in transcriptional regulation. This is Zinc finger protein 26 (ZNF26) from Homo sapiens (Human).